Consider the following 141-residue polypeptide: Nucleoside diphosphate kinase (141 aa).

ATP-binding residues include Lys11, Phe59, Arg87, Thr93, Arg104, and Asn114. The Pros-phosphohistidine intermediate role is filled by His117.

This sequence belongs to the NDK family. In terms of assembly, homotetramer. The cofactor is Mg(2+).

The protein localises to the cytoplasm. It catalyses the reaction a 2'-deoxyribonucleoside 5'-diphosphate + ATP = a 2'-deoxyribonucleoside 5'-triphosphate + ADP. The enzyme catalyses a ribonucleoside 5'-diphosphate + ATP = a ribonucleoside 5'-triphosphate + ADP. Functionally, major role in the synthesis of nucleoside triphosphates other than ATP. The ATP gamma phosphate is transferred to the NDP beta phosphate via a ping-pong mechanism, using a phosphorylated active-site intermediate. The protein is Nucleoside diphosphate kinase of Albidiferax ferrireducens (strain ATCC BAA-621 / DSM 15236 / T118) (Rhodoferax ferrireducens).